A 190-amino-acid chain; its full sequence is Xanthine phosphoribosyltransferase 2 (190 aa).

Xanthine contacts are provided by Leu-20 and Asn-27. Residue 129–133 (ANGCA) coordinates 5-phospho-alpha-D-ribose 1-diphosphate. Lys-157 lines the xanthine pocket.

It belongs to the purine/pyrimidine phosphoribosyltransferase family. Xpt subfamily. As to quaternary structure, homodimer.

It is found in the cytoplasm. It catalyses the reaction XMP + diphosphate = xanthine + 5-phospho-alpha-D-ribose 1-diphosphate. It functions in the pathway purine metabolism; XMP biosynthesis via salvage pathway; XMP from xanthine: step 1/1. Its function is as follows. Converts the preformed base xanthine, a product of nucleic acid breakdown, to xanthosine 5'-monophosphate (XMP), so it can be reused for RNA or DNA synthesis. This Clostridium botulinum (strain ATCC 19397 / Type A) protein is Xanthine phosphoribosyltransferase 2.